We begin with the raw amino-acid sequence, 233 residues long: MMLEFSEVRLAPNFVDYMQAWEMQQKLHDAVVEGQAPSTVLLLEHAAVYTAGKRTEDHERPFDGTPVIPVDRGGKLTWHGPGQLVGYPIIALADPHAIREYVATLEDILIAVLAQFGIKGERVDGRAGIWLLADAKGPTRKIAAIGIRVHNGVTMHGFSLNCDNDLAPYGQIIACGITDAGATTMELETGRNISPAQVLPHIIKEFSAREATLIGAPAHEAVVPARATEGATQ.

The region spanning 34–214 (GQAPSTVLLL…EFSAREATLI (181 aa)) is the BPL/LPL catalytic domain. Residues 72-79 (RGGKLTWH), 144-146 (AIG), and 157-159 (GFS) each bind substrate. Cys175 serves as the catalytic Acyl-thioester intermediate.

It belongs to the LipB family.

Its subcellular location is the cytoplasm. It catalyses the reaction octanoyl-[ACP] + L-lysyl-[protein] = N(6)-octanoyl-L-lysyl-[protein] + holo-[ACP] + H(+). It functions in the pathway protein modification; protein lipoylation via endogenous pathway; protein N(6)-(lipoyl)lysine from octanoyl-[acyl-carrier-protein]: step 1/2. In terms of biological role, catalyzes the transfer of endogenously produced octanoic acid from octanoyl-acyl-carrier-protein onto the lipoyl domains of lipoate-dependent enzymes. Lipoyl-ACP can also act as a substrate although octanoyl-ACP is likely to be the physiological substrate. The chain is Octanoyltransferase from Renibacterium salmoninarum (strain ATCC 33209 / DSM 20767 / JCM 11484 / NBRC 15589 / NCIMB 2235).